Consider the following 91-residue polypeptide: C-C motif chemokine 5 (91 aa).

A signal peptide spans 1–23; that stretch reads MKVSAATFAILLATATFRAPASA. 2 disulfide bridges follow: Cys33–Cys57 and Cys34–Cys73.

This sequence belongs to the intercrine beta (chemokine CC) family.

The protein resides in the secreted. Chemoattractant for blood monocytes, memory T-helper cells and eosinophils. Causes the release of histamine from basophils and activates eosinophils. May activate several chemokine receptors including CCR1, CCR3, CCR4 and CCR5. May also be an agonist of the G protein-coupled receptor GPR75. Together with GPR75, may play a role in neuron survival through activation of a downstream signaling pathway involving the PI3, Akt and MAP kinases. By activating GPR75 may also play a role in insulin secretion by islet cells. This chain is C-C motif chemokine 5 (CCL5), found in Canis lupus familiaris (Dog).